Consider the following 185-residue polypeptide: Elongation factor P (185 aa).

This sequence belongs to the elongation factor P family.

It localises to the cytoplasm. It participates in protein biosynthesis; polypeptide chain elongation. Functionally, involved in peptide bond synthesis. Stimulates efficient translation and peptide-bond synthesis on native or reconstituted 70S ribosomes in vitro. Probably functions indirectly by altering the affinity of the ribosome for aminoacyl-tRNA, thus increasing their reactivity as acceptors for peptidyl transferase. The polypeptide is Elongation factor P (Staphylococcus aureus (strain Mu3 / ATCC 700698)).